The following is a 79-amino-acid chain: D-alanyl carrier protein (79 aa).

Residues 1–76 (MKEQIFDIIE…KIAARVQEKT (76 aa)) form the Carrier domain. Ser34 carries the post-translational modification O-(pantetheine 4'-phosphoryl)serine.

It belongs to the DltC family. 4'-phosphopantetheine is transferred from CoA to a specific serine of apo-DCP.

It is found in the cytoplasm. It participates in cell wall biogenesis; lipoteichoic acid biosynthesis. Carrier protein involved in the D-alanylation of lipoteichoic acid (LTA). The loading of thioester-linked D-alanine onto DltC is catalyzed by D-alanine--D-alanyl carrier protein ligase DltA. The DltC-carried D-alanyl group is further transferred to cell membrane phosphatidylglycerol (PG) by forming an ester bond, probably catalyzed by DltD. D-alanylation of LTA plays an important role in modulating the properties of the cell wall in Gram-positive bacteria, influencing the net charge of the cell wall. This is D-alanyl carrier protein from Lactococcus lactis subsp. cremoris (strain SK11).